A 255-amino-acid chain; its full sequence is 5-oxoprolinase subunit A (255 aa).

It belongs to the LamB/PxpA family. In terms of assembly, forms a complex composed of PxpA, PxpB and PxpC.

The catalysed reaction is 5-oxo-L-proline + ATP + 2 H2O = L-glutamate + ADP + phosphate + H(+). Functionally, catalyzes the cleavage of 5-oxoproline to form L-glutamate coupled to the hydrolysis of ATP to ADP and inorganic phosphate. In Rhodopseudomonas palustris (strain BisA53), this protein is 5-oxoprolinase subunit A.